The following is a 195-amino-acid chain: Inhibitor of glycogen debranching 1 (195 aa).

The span at 1–18 (MTDPHLNTPQVSTSPTFE) shows a compositional bias: polar residues. Residues 1–101 (MTDPHLNTPQ…ERRSSGPMDF (101 aa)) are disordered. A Phosphoserine modification is found at Ser64. Residue Thr65 is modified to Phosphothreonine. Over residues 75 to 95 (EQARERESSIGEHAPGAERRS) the composition is skewed to basic and acidic residues. 2 positions are modified to phosphoserine: Ser95 and Ser96. Thr132 is subject to Phosphothreonine. Residues 146–175 (NSYLDNNSNGNSARVPHGSPPQLGTRRKSS) are disordered. The span at 148 to 157 (YLDNNSNGNS) shows a compositional bias: polar residues. A Phosphoserine modification is found at Ser164.

In terms of assembly, interacts with GDB1.

It localises to the cytoplasm. In terms of biological role, acts as an inhibitor of GDB1, enhancing the ability of cells to store glucose as glycogen. The polypeptide is Inhibitor of glycogen debranching 1 (IGD1) (Saccharomyces cerevisiae (strain ATCC 204508 / S288c) (Baker's yeast)).